A 359-amino-acid polypeptide reads, in one-letter code: Mitochondrial calcium uniporter regulator 1 (359 aa).

Over 1–68 (MDCGSVGGQR…ARGGVSRASP (68 aa)) the chain is Mitochondrial intermembrane. Residues 69-85 (LLLLLLVPSPRLAAAAP) form a helical membrane-spanning segment. Over 86-338 (RRQLGDWERS…LESHKLDNIK (253 aa)) the chain is Mitochondrial matrix. A coiled-coil region spans residues 235 to 310 (EKSEFSALRA…VALHAQQDRA (76 aa)). The chain crosses the membrane as a helical span at residues 339–358 (YLAGSIFTCLTVALGFYRLW). Residue isoleucine 359 is a topological domain, mitochondrial intermembrane.

This sequence belongs to the CCDC90 family. Interacts (via coiled coil regions) with MCU; the interaction is direct. Interacts with SMDT1/EMRE; the interaction is direct. Interacts with PPIF. In terms of tissue distribution, ubiquitously expressed.

It localises to the mitochondrion inner membrane. In terms of biological role, key regulator of mitochondrial calcium uniporter (MCU) required for calcium entry into mitochondrion. Plays a direct role in uniporter-mediated calcium uptake via a direct interaction with MCU. Probably involved in the assembly of the membrane components of the uniporter complex (uniplex). In Homo sapiens (Human), this protein is Mitochondrial calcium uniporter regulator 1.